The following is a 199-amino-acid chain: UPF0637 protein YsbB (199 aa).

The protein belongs to the UPF0637 family.

The chain is UPF0637 protein YsbB (ysbB) from Lactococcus lactis subsp. lactis (strain IL1403) (Streptococcus lactis).